We begin with the raw amino-acid sequence, 561 residues long: DNA ligase B (561 aa).

Catalysis depends on Lys-125, which acts as the N6-AMP-lysine intermediate.

This sequence belongs to the NAD-dependent DNA ligase family. LigB subfamily.

The catalysed reaction is NAD(+) + (deoxyribonucleotide)n-3'-hydroxyl + 5'-phospho-(deoxyribonucleotide)m = (deoxyribonucleotide)n+m + AMP + beta-nicotinamide D-nucleotide.. In terms of biological role, catalyzes the formation of phosphodiester linkages between 5'-phosphoryl and 3'-hydroxyl groups in double-stranded DNA using NAD as a coenzyme and as the energy source for the reaction. The polypeptide is DNA ligase B (Salmonella agona (strain SL483)).